Reading from the N-terminus, the 187-residue chain is Large ribosomal subunit protein uL6 (187 aa).

The tract at residues 159 to 187 (PYKGKGIRYKGEQLSSNPERLQVRSKEVR) is disordered.

Belongs to the universal ribosomal protein uL6 family. In terms of assembly, part of the 50S ribosomal subunit.

Functionally, this protein binds to the 23S rRNA, and is important in its secondary structure. It is located near the subunit interface in the base of the L7/L12 stalk, and near the tRNA binding site of the peptidyltransferase center. This chain is Large ribosomal subunit protein uL6, found in Aquifex pyrophilus.